Reading from the N-terminus, the 287-residue chain is 4-hydroxybenzoate octaprenyltransferase (287 aa).

Transmembrane regions (helical) follow at residues 20 to 38 (IGTL…FAAG), 95 to 115 (IVFL…NPLV), 211 to 231 (IIAA…LIAE), 235 to 255 (IYGG…KLIF), and 266 to 286 (FLNN…DYLV).

This sequence belongs to the UbiA prenyltransferase family. Mg(2+) serves as cofactor.

It is found in the cell inner membrane. It catalyses the reaction all-trans-octaprenyl diphosphate + 4-hydroxybenzoate = 4-hydroxy-3-(all-trans-octaprenyl)benzoate + diphosphate. Its pathway is cofactor biosynthesis; ubiquinone biosynthesis. Its function is as follows. Catalyzes the prenylation of para-hydroxybenzoate (PHB) with an all-trans polyprenyl group. Mediates the second step in the final reaction sequence of ubiquinone-8 (UQ-8) biosynthesis, which is the condensation of the polyisoprenoid side chain with PHB, generating the first membrane-bound Q intermediate 3-octaprenyl-4-hydroxybenzoate. The chain is 4-hydroxybenzoate octaprenyltransferase from Shewanella piezotolerans (strain WP3 / JCM 13877).